The sequence spans 329 residues: Phosphate acyltransferase (329 aa).

Belongs to the PlsX family. As to quaternary structure, homodimer. Probably interacts with PlsY.

It localises to the cytoplasm. It catalyses the reaction a fatty acyl-[ACP] + phosphate = an acyl phosphate + holo-[ACP]. The protein operates within lipid metabolism; phospholipid metabolism. Its function is as follows. Catalyzes the reversible formation of acyl-phosphate (acyl-PO(4)) from acyl-[acyl-carrier-protein] (acyl-ACP). This enzyme utilizes acyl-ACP as fatty acyl donor, but not acyl-CoA. In Campylobacter fetus subsp. fetus (strain 82-40), this protein is Phosphate acyltransferase.